We begin with the raw amino-acid sequence, 57 residues long: Small ribosomal subunit protein bS21 (57 aa).

The disordered stretch occupies residues 32-57 (VRKRKHFEKPSVKRKKKSEAARKRKF). The segment covering 33-57 (RKRKHFEKPSVKRKKKSEAARKRKF) has biased composition (basic residues).

It belongs to the bacterial ribosomal protein bS21 family.

This is Small ribosomal subunit protein bS21 from Shouchella clausii (strain KSM-K16) (Alkalihalobacillus clausii).